Here is a 160-residue protein sequence, read N- to C-terminus: SsrA-binding protein (160 aa).

It belongs to the SmpB family.

The protein localises to the cytoplasm. Its function is as follows. Required for rescue of stalled ribosomes mediated by trans-translation. Binds to transfer-messenger RNA (tmRNA), required for stable association of tmRNA with ribosomes. tmRNA and SmpB together mimic tRNA shape, replacing the anticodon stem-loop with SmpB. tmRNA is encoded by the ssrA gene; the 2 termini fold to resemble tRNA(Ala) and it encodes a 'tag peptide', a short internal open reading frame. During trans-translation Ala-aminoacylated tmRNA acts like a tRNA, entering the A-site of stalled ribosomes, displacing the stalled mRNA. The ribosome then switches to translate the ORF on the tmRNA; the nascent peptide is terminated with the 'tag peptide' encoded by the tmRNA and targeted for degradation. The ribosome is freed to recommence translation, which seems to be the essential function of trans-translation. The polypeptide is SsrA-binding protein (Histophilus somni (strain 129Pt) (Haemophilus somnus)).